We begin with the raw amino-acid sequence, 523 residues long: Thiamine pathway transporter THI73 (523 aa).

Residues 1-79 lie on the Cytoplasmic side of the membrane; that stretch reads MKNMSQRSMD…LSPKVLRKVD (79 aa). Residues 80-100 form a helical membrane-spanning segment; sequence LFILPFLCCTYLLMFLDKALL. At 101-118 the chain is on the extracellular side; it reads NYAASMGIKDHLKGNEFS. Residues 119-139 form a helical membrane-spanning segment; that stretch reads NLGTIFSAAYIFMEPVVTYLI. The Cytoplasmic portion of the chain corresponds to 140-141; that stretch reads QK. The helical transmembrane segment at 142–162 threads the bilayer; the sequence is FPISKILGTFITVWGIVLACH. Residues 163 to 176 are Extracellular-facing; the sequence is AACKTYASLMVVRT. The chain crosses the membrane as a helical span at residues 177–197; sequence LLGLFESSSAVGCIAISGMYY. Residues 198–207 lie on the Cytoplasmic side of the membrane; it reads TKSEQSARIG. A helical membrane pass occupies residues 208-228; it reads FWATQAGTGYIVGGLISFGFL. Over 229-239 the chain is Extracellular; sequence HYHGTAFTSWQ. The chain crosses the membrane as a helical span at residues 240–260; it reads IMFLVVGLVTVAFGVLTFLYL. At 261–312 the chain is on the cytoplasmic side; the sequence is PDNVTNAWFLNKEEKIQVVEHIRANQTGLETKKFKKQQVKELFLHDKFTWPM. Residues 313–333 traverse the membrane as a helical segment; the sequence is LLLTACSQISTGAIGTFSVTI. Residues 334 to 345 are Extracellular-facing; that stretch reads TGTFGFDKYETA. Residues 346-366 traverse the membrane as a helical segment; that stretch reads LLQLPIGAITAMIILITTQML. Topologically, residues 367–371 are cytoplasmic; that stretch reads SRWGH. The helical transmembrane segment at 372–392 threads the bilayer; the sequence is ITLITTSMYIPAIIGCIVLIS. At 393-400 the chain is on the extracellular side; it reads LPLSHKIG. The helical transmembrane segment at 401 to 421 threads the bilayer; sequence NLFSLYLLYSGSCVITNIYIW. Residues 422–432 lie on the Cytoplasmic side of the membrane; it reads NSCNTSGYTKR. Residues 433–452 traverse the membrane as a helical segment; that stretch reads VFRNAITMIVYNVSCIIAPQ. Residues 453-466 lie on the Extracellular side of the membrane; that stretch reads MFRAYSAPRYIPAK. The helical transmembrane segment at 467-487 threads the bilayer; sequence IALLVTQCVCVPLQLYIGYIC. At 488–523 the chain is on the cytoplasmic side; the sequence is KKENEKRDKEQEGQERKKYQFLDLTDIENRNFRYIY.

This sequence belongs to the major facilitator superfamily. Allantoate permease family.

Its subcellular location is the endoplasmic reticulum membrane. It localises to the cell membrane. Transports either thiamine or, rather, a related metabolite involved in the thiamine biosynthesis pathway. This chain is Thiamine pathway transporter THI73 (THI73), found in Saccharomyces cerevisiae (strain ATCC 204508 / S288c) (Baker's yeast).